Here is a 1124-residue protein sequence, read N- to C-terminus: Zinc finger E-box-binding homeobox 1 (1124 aa).

2 disordered regions span residues 1–124 (MADG…NHDP) and 142–163 (APEE…NGTP). The span at 18–30 (NNVTNYNTVVETN) shows a compositional bias: low complexity. Phosphoserine occurs at positions 31 and 33. Residues 44 to 62 (EESVTDAADCEGVPEDDLP) show a composition bias toward acidic residues. A compositionally biased stretch (basic and acidic residues) spans 72–91 (SSEREGNAKNCWEDDRKEGQ). The segment at 170–193 (LTCPYCDRGYKRFTSLKEHIKYRH) adopts a C2H2-type 1 zinc-finger fold. Glycyl lysine isopeptide (Lys-Gly) (interchain with G-Cter in SUMO2) cross-links involve residues K186 and K195. C2H2-type zinc fingers lie at residues 200-222 (FSCS…MTSH) and 240-262 (FKCT…LRIH). The segment at 268 to 292 (YECPNCKKRFSHSGSYSSHISSKKC) adopts a C2H2-type 4; atypical zinc-finger fold. Residues 304 to 327 (TGLKTSQCSSPSLSASPGSPTRPQ) form a disordered region. K307 participates in a covalent cross-link: Glycyl lysine isopeptide (Lys-Gly) (interchain with G-Cter in SUMO2). Over residues 309–322 (SQCSSPSLSASPGS) the composition is skewed to low complexity. S313 and S322 each carry phosphoserine. Glycyl lysine isopeptide (Lys-Gly) (interchain with G-Cter in SUMO2) cross-links involve residues K331 and K335. K347 is covalently cross-linked (Glycyl lysine isopeptide (Lys-Gly) (interchain with G-Cter in SUMO); alternate). A Glycyl lysine isopeptide (Lys-Gly) (interchain with G-Cter in SUMO2); alternate cross-link involves residue K347. Residues K439, K493, K504, K515, K548, and K553 each participate in a glycyl lysine isopeptide (Lys-Gly) (interchain with G-Cter in SUMO2) cross-link. Disordered stretches follow at residues 551–586 (DLKQ…SPSQ) and 636–714 (QISV…SSSR). The homeobox; atypical DNA-binding region spans 581–640 (NLSPSQPPLKNLLSLLKAYYALNAQPSAEELSKIADSVNLPLDVVKKWFEKMQAGQISVQ). Phosphoserine occurs at positions 642, 679, 686, 693, and 700. The span at 656–687 (AKNNDQPQSANANEPQDSTVNLQSPLKMTNSP) shows a compositional bias: polar residues. Over residues 692–714 (GSTTNGSRSSTPSPSPLNLSSSR) the composition is skewed to low complexity. Position 702 is a phosphothreonine (T702). S704 is modified (phosphoserine). K774 is covalently cross-linked (Glycyl lysine isopeptide (Lys-Gly) (interchain with G-Cter in SUMO); alternate). Residue K774 forms a Glycyl lysine isopeptide (Lys-Gly) (interchain with G-Cter in SUMO2); alternate linkage. Residues 856–898 (PPLKVIQPNGNQDERQDTSSEGVSNVEDQNDSDSTPPKKKMRK) are disordered. Over residues 874–890 (SSEGVSNVEDQNDSDST) the composition is skewed to polar residues. 2 C2H2-type zinc fingers span residues 904–926 (YACD…KYEH) and 932–954 (HECG…MRLH). The C2H2-type 7; atypical zinc finger occupies 960–981 (YQCDKCGKRFSHSGSYSQHMNH). The tract at residues 989–1124 (EAEERDSTEQ…QVSEEKTNEA (136 aa)) is disordered. Acidic residues-rich tracts occupy residues 1031–1052 (EEDE…ELQE) and 1062–1084 (DEEE…ENEG). Residues 1085–1099 (EEAKTEGLMKDDRAE) are compositionally biased toward basic and acidic residues. Residues 1100–1115 (SQASSLGQKVGESSEQ) show a composition bias toward polar residues.

It belongs to the delta-EF1/ZFH-1 C2H2-type zinc-finger family. As to quaternary structure, interacts (via N-terminus) with SMARCA4/BRG1. In terms of processing, ubiquitinated, leading to degradation in a proteasome-dependent manner. Deubiquitinated by USP51, leading to stabilization. Colocalizes with SMARCA4/BRG1 in E-cadherin-negative cells from established lines, and stroma of normal colon as well as in de-differentiated epithelial cells at the invasion front of colorectal carcinomas (at protein level). Expressed in heart and skeletal muscle, but not in liver, spleen, or pancreas.

It localises to the nucleus. Its function is as follows. Acts as a transcriptional repressor. Inhibits interleukin-2 (IL-2) gene expression. Enhances or represses the promoter activity of the ATP1A1 gene depending on the quantity of cDNA and on the cell type. Represses E-cadherin promoter and induces an epithelial-mesenchymal transition (EMT) by recruiting SMARCA4/BRG1. Represses BCL6 transcription in the presence of the corepressor CTBP1. Positively regulates neuronal differentiation. Represses RCOR1 transcription activation during neurogenesis. Represses transcription by binding to the E box (5'-CANNTG-3'). In the absence of TGFB1, acts as a repressor of COL1A2 transcription via binding to the E-box in the upstream enhancer region. The sequence is that of Zinc finger E-box-binding homeobox 1 from Homo sapiens (Human).